Here is a 382-residue protein sequence, read N- to C-terminus: Pyrimidine monooxygenase RutA (382 aa).

FMN is bound by residues 68-69 (IK), N134, E143, 159-160 (RY), and S209.

Belongs to the NtaA/SnaA/DszA monooxygenase family. RutA subfamily.

The catalysed reaction is uracil + FMNH2 + NADH + O2 = (Z)-3-ureidoacrylate + FMN + NAD(+) + H2O + H(+). It catalyses the reaction thymine + FMNH2 + NADH + O2 = (Z)-2-methylureidoacrylate + FMN + NAD(+) + H2O + H(+). Its function is as follows. Catalyzes the pyrimidine ring opening between N-3 and C-4 by an unusual flavin hydroperoxide-catalyzed mechanism, adding oxygen atoms in the process to yield ureidoacrylate peracid, that immediately reacts with FMN forming ureidoacrylate and FMN-N(5)-oxide. The FMN-N(5)-oxide reacts spontaneously with NADH to produce FMN. Requires the flavin reductase RutF to regenerate FMN in vivo. The sequence is that of Pyrimidine monooxygenase RutA from Escherichia coli (strain B / BL21-DE3).